Consider the following 371-residue polypeptide: Probable alcohol acetyltransferase (371 aa).

Residues serine 124 and histidine 295 each act as charge relay system in the active site. Residues alanine 325–threonine 352 form a disordered region. Over residues alanine 327–tyrosine 336 the composition is skewed to basic and acidic residues.

It belongs to the AB hydrolase superfamily.

Probable alcohol acetyltransferase that uses acetyl-CoA to synthesize acetate esters from various alcohols. Not involved in the synthesis of ethyl acetate. The sequence is that of Probable alcohol acetyltransferase (EAT2) from Cyberlindnera fabianii (Yeast).